Consider the following 404-residue polypeptide: MDMMKKRKLDENGNGLNTNGGGTIGPTRLSPQDARKIIERFTTDQLLDLLQEAIVRHPDVLESVRLTADSDISQRKLFIRGLAADTTTEGLRSLFSSYGDLEEAIVILDKVTGKSKGYGFVTFMHVDGALLALKEPSKKIDGRVTVTQLAASGNQGTGSQIADISMRKIYVANVPFDMPADRLLNHFMAYGDVEEGPLGFDKVTGKSRGFALFVYKTAEGAQAALADPVKVIDGKHLNCKLAVDGKKGGKPGMPQAQDGGSGHGHVHGEGMGMVRPAGPYGAAGGISAYGGYSGGPPAHHMNSTHSSMGVGSAGYGGHYGGYGGPGGTGVYGGLGGGYGGPGTGSGQYRMPPSSMPGGGGYPESGHYGLSSSAGYPGQHHQAVGTSPVPRVPHGGMYPNGPPNY.

Positions 1–29 (MDMMKKRKLDENGNGLNTNGGGTIGPTRL) are disordered. RRM domains are found at residues 75-152 (RKLF…LAAS) and 167-248 (RKIY…GKKG). 2 disordered regions span residues 246 to 270 (KKGG…HGEG) and 344 to 404 (GSGQ…PPNY).

In terms of tissue distribution, expressed in root apical and lateral meristems, young leaves and embryos.

It is found in the nucleus. Functionally, heterogeneous nuclear ribonucleoprotein (hnRNP)-like protein that acts as a component of a complex regulating the turnover of mRNAs in the nucleus. Binds with high affinity to RNA molecules that contain U-rich sequences in 3'-UTRs. May function in complex with UBP1 and contribute to the stabilization of mRNAs in the nucleus. This chain is UBP1-associated protein 2C (UBA2C), found in Arabidopsis thaliana (Mouse-ear cress).